Consider the following 374-residue polypeptide: L-serine/homoserine O-acetyltransferase (374 aa).

Residues 46-357 enclose the AB hydrolase-1 domain; that stretch reads AVLVLTGLSP…TPAGHDAFLV (312 aa). The active-site Nucleophile is S149. Catalysis depends on residues D319 and H352.

This sequence belongs to the AB hydrolase superfamily. MetX family. As to quaternary structure, homodimer.

It is found in the cytoplasm. The catalysed reaction is L-serine + acetyl-CoA = O-acetyl-L-serine + CoA. It carries out the reaction L-homoserine + acetyl-CoA = O-acetyl-L-homoserine + CoA. It participates in antibiotic biosynthesis. In terms of biological role, involved in the biosynthesis of the antibiotic D-cycloserine (DCS), a cyclic structural analog of D-alanine, used as an antitubercular agent. Catalyzes the transfer of the acetyl group from acetyl-CoA to the hydroxyl group of L-serine to yield the activated serine, O-acetyl-L-serine. It prefers L-serine over L-homoserine. In Streptomyces lavendulae, this protein is L-serine/homoserine O-acetyltransferase.